Here is a 152-residue protein sequence, read N- to C-terminus: 3-hydroxyacyl-[acyl-carrier-protein] dehydratase FabZ (152 aa).

H58 is a catalytic residue.

Belongs to the thioester dehydratase family. FabZ subfamily.

It localises to the cytoplasm. The catalysed reaction is a (3R)-hydroxyacyl-[ACP] = a (2E)-enoyl-[ACP] + H2O. Involved in unsaturated fatty acids biosynthesis. Catalyzes the dehydration of short chain beta-hydroxyacyl-ACPs and long chain saturated and unsaturated beta-hydroxyacyl-ACPs. This is 3-hydroxyacyl-[acyl-carrier-protein] dehydratase FabZ from Prochlorococcus marinus (strain AS9601).